The sequence spans 295 residues: 3-methyl-2-oxobutanoate hydroxymethyltransferase (295 aa).

The tract at residues 1–30 (MTSGRAMSPEETAPYGTGPARAESAPDAPA) is disordered. Mg(2+) is bound by residues Asp76 and Asp115. 3-methyl-2-oxobutanoate is bound by residues 76 to 77 (DS), Asp115, and Lys145. Glu147 is a binding site for Mg(2+). Glu213 functions as the Proton acceptor in the catalytic mechanism.

The protein belongs to the PanB family. Homodecamer; pentamer of dimers. Mg(2+) is required as a cofactor.

It localises to the cytoplasm. It catalyses the reaction 3-methyl-2-oxobutanoate + (6R)-5,10-methylene-5,6,7,8-tetrahydrofolate + H2O = 2-dehydropantoate + (6S)-5,6,7,8-tetrahydrofolate. The protein operates within cofactor biosynthesis; (R)-pantothenate biosynthesis; (R)-pantoate from 3-methyl-2-oxobutanoate: step 1/2. Catalyzes the reversible reaction in which hydroxymethyl group from 5,10-methylenetetrahydrofolate is transferred onto alpha-ketoisovalerate to form ketopantoate. The polypeptide is 3-methyl-2-oxobutanoate hydroxymethyltransferase (Nocardioides sp. (strain ATCC BAA-499 / JS614)).